We begin with the raw amino-acid sequence, 509 residues long: Protein MAIN-LIKE 1 (509 aa).

The tract at residues 477–509 is disordered; it reads GYGKRRRRNEHTPTPNNGGGNDISSLLLQKEDS. Residues 488–503 are compositionally biased toward polar residues; sequence TPTPNNGGGNDISSLL.

As to expression, expressed in root tips, the shoot apical meristem (SAM), leaves, mature flowers and embryos.

It localises to the nucleus. In terms of biological role, acts as an important factor for cell fate determination and maintenance throughout plant development. Required for the organization of the root apical meristem (RAM) and the shoot apical meristem (SAM). Required to maintain genome stability and cell division activity in meristematic cells. This is Protein MAIN-LIKE 1 from Arabidopsis thaliana (Mouse-ear cress).